The following is a 482-amino-acid chain: Putative L-cysteine desulfhydrase 1 (482 aa).

Residues 1 to 10 are compositionally biased toward acidic residues; the sequence is MASIPPDDDA. The interval 1-45 is disordered; the sequence is MASIPPDDDAAAAAAAGAAENGYGNGKGNGNGPAPRPPPAKRPRS. The span at 11–22 shows a compositional bias: low complexity; that stretch reads AAAAAAGAAENG. At lysine 276 the chain carries N6-(pyridoxal phosphate)lysine.

Belongs to the class-V pyridoxal-phosphate-dependent aminotransferase family. It depends on pyridoxal 5'-phosphate as a cofactor.

The enzyme catalyses L-cysteine + H2O = hydrogen sulfide + pyruvate + NH4(+) + H(+). Its function is as follows. Catalyzes the production of hydrogen sulfide (H2S) from cysteine. The protein is Putative L-cysteine desulfhydrase 1 of Oryza sativa subsp. japonica (Rice).